We begin with the raw amino-acid sequence, 151 residues long: Metalloproteinase inhibitor 3 (151 aa).

In terms of domain architecture, NTR spans C1–C108. Intrachain disulfides connect C1–C108, C115–C120, and C128–C149. The tract at residues E53–S54 is involved in metalloproteinase-binding. Residues G71–R151 are mediates interaction with EFEMP1.

This sequence belongs to the protease inhibitor I35 (TIMP) family. Interacts with EFEMP1.

It localises to the secreted. Its subcellular location is the extracellular space. The protein localises to the extracellular matrix. Complexes with metalloproteinases (such as collagenases) and irreversibly inactivates them by binding to their catalytic zinc cofactor. May form part of a tissue-specific acute response to remodeling stimuli. The polypeptide is Metalloproteinase inhibitor 3 (TIMP3) (Oryctolagus cuniculus (Rabbit)).